A 93-amino-acid chain; its full sequence is Consomatin G1 (93 aa).

A signal peptide spans 1 to 22 (MQTAYWVMLMMMVCITAPLPEG). Residues 23 to 69 (GKPNSGIRGLVPNDLTPQHTLRSLISRRQTDVLLDATLLTTPAPEQR) constitute a propeptide that is removed on maturation. A disulfide bond links Cys72 and Cys77. Trp74 is subject to D-tryptophan. Positions 79–93 (PRPYPWRRRDLNGKR) are excised as a propeptide.

This sequence belongs to the conotoxin C superfamily. Consomatin family. Expressed by the venom duct.

It localises to the secreted. Functionally, potently activates human somatostatin receptors (SSTR) with a specific activation of SSTR2 (EC(50)=2.6 nM). The chain is Consomatin G1 from Conus geographus (Geography cone).